Reading from the N-terminus, the 356-residue chain is D-xylulose reductase (356 aa).

Residues Cys-44, His-69, and Glu-155 each contribute to the Zn(2+) site. Residue 179–184 coordinates NAD(+); it reads GAGPIG.

Belongs to the zinc-containing alcohol dehydrogenase family. It depends on Zn(2+) as a cofactor.

It carries out the reaction xylitol + NAD(+) = D-xylulose + NADH + H(+). Its pathway is carbohydrate degradation; L-arabinose degradation via L-arabinitol; D-xylulose 5-phosphate from L-arabinose (fungal route): step 4/5. The polypeptide is D-xylulose reductase (XYL2) (Saccharomyces cerevisiae (strain ATCC 204508 / S288c) (Baker's yeast)).